Reading from the N-terminus, the 227-residue chain is ATP-dependent dethiobiotin synthetase BioD (227 aa).

13–18 serves as a coordination point for ATP; sequence DIGKTY. T17 is a Mg(2+) binding site. K38 is an active-site residue. Position 42 (S42) interacts with substrate. Residues D55, 116–119, and 179–180 contribute to the ATP site; these read EGSG and NN. Mg(2+) contacts are provided by D55 and E116.

This sequence belongs to the dethiobiotin synthetase family. Homodimer. It depends on Mg(2+) as a cofactor.

The protein localises to the cytoplasm. The enzyme catalyses (7R,8S)-7,8-diammoniononanoate + CO2 + ATP = (4R,5S)-dethiobiotin + ADP + phosphate + 3 H(+). Its pathway is cofactor biosynthesis; biotin biosynthesis; biotin from 7,8-diaminononanoate: step 1/2. Catalyzes a mechanistically unusual reaction, the ATP-dependent insertion of CO2 between the N7 and N8 nitrogen atoms of 7,8-diaminopelargonic acid (DAPA, also called 7,8-diammoniononanoate) to form a ureido ring. This chain is ATP-dependent dethiobiotin synthetase BioD, found in Clostridium botulinum (strain Langeland / NCTC 10281 / Type F).